Here is a 177-residue protein sequence, read N- to C-terminus: Large ribosomal subunit protein uL6 (177 aa).

This sequence belongs to the universal ribosomal protein uL6 family. In terms of assembly, part of the 50S ribosomal subunit.

In terms of biological role, this protein binds to the 23S rRNA, and is important in its secondary structure. It is located near the subunit interface in the base of the L7/L12 stalk, and near the tRNA binding site of the peptidyltransferase center. This is Large ribosomal subunit protein uL6 from Rickettsia bellii (strain OSU 85-389).